The primary structure comprises 273 residues: Glutamate 5-kinase (273 aa).

Residue lysine 15 participates in ATP binding. Residues serine 55, aspartate 142, and asparagine 158 each coordinate substrate. ATP is bound by residues 178 to 179 (SD) and 220 to 226 (TGGMLSK).

The protein belongs to the glutamate 5-kinase family.

Its subcellular location is the cytoplasm. It catalyses the reaction L-glutamate + ATP = L-glutamyl 5-phosphate + ADP. It participates in amino-acid biosynthesis; L-proline biosynthesis; L-glutamate 5-semialdehyde from L-glutamate: step 1/2. Catalyzes the transfer of a phosphate group to glutamate to form L-glutamate 5-phosphate. The polypeptide is Glutamate 5-kinase (Streptococcus pyogenes serotype M49 (strain NZ131)).